Here is a 466-residue protein sequence, read N- to C-terminus: Bifunctional protein GlmU (466 aa).

Residues 1–233 (MLHKSVLGLV…ADEAMGANDR (233 aa)) form a pyrophosphorylase region. UDP-N-acetyl-alpha-D-glucosamine is bound by residues 11-14 (LAAG), lysine 25, glutamine 79, and 84-85 (GT). Aspartate 108 contributes to the Mg(2+) binding site. UDP-N-acetyl-alpha-D-glucosamine is bound by residues glycine 143, glutamate 158, asparagine 173, and asparagine 231. Residue asparagine 231 participates in Mg(2+) binding. Residues 234-254 (AQLAALEAVYRQRKVQELFAQ) are linker. The segment at 255–466 (GVTLIDPNRI…QKKKEHKNDA (212 aa)) is N-acetyltransferase. Residues arginine 337 and lysine 355 each contribute to the UDP-N-acetyl-alpha-D-glucosamine site. The Proton acceptor role is filled by histidine 367. 2 residues coordinate UDP-N-acetyl-alpha-D-glucosamine: tyrosine 370 and asparagine 381. Acetyl-CoA contacts are provided by residues alanine 384, 390-391 (NY), serine 409, alanine 427, and arginine 444.

It in the N-terminal section; belongs to the N-acetylglucosamine-1-phosphate uridyltransferase family. In the C-terminal section; belongs to the transferase hexapeptide repeat family. In terms of assembly, homotrimer. Mg(2+) serves as cofactor.

The protein localises to the cytoplasm. It carries out the reaction alpha-D-glucosamine 1-phosphate + acetyl-CoA = N-acetyl-alpha-D-glucosamine 1-phosphate + CoA + H(+). It catalyses the reaction N-acetyl-alpha-D-glucosamine 1-phosphate + UTP + H(+) = UDP-N-acetyl-alpha-D-glucosamine + diphosphate. It functions in the pathway nucleotide-sugar biosynthesis; UDP-N-acetyl-alpha-D-glucosamine biosynthesis; N-acetyl-alpha-D-glucosamine 1-phosphate from alpha-D-glucosamine 6-phosphate (route II): step 2/2. It participates in nucleotide-sugar biosynthesis; UDP-N-acetyl-alpha-D-glucosamine biosynthesis; UDP-N-acetyl-alpha-D-glucosamine from N-acetyl-alpha-D-glucosamine 1-phosphate: step 1/1. Its pathway is bacterial outer membrane biogenesis; LPS lipid A biosynthesis. In terms of biological role, catalyzes the last two sequential reactions in the de novo biosynthetic pathway for UDP-N-acetylglucosamine (UDP-GlcNAc). The C-terminal domain catalyzes the transfer of acetyl group from acetyl coenzyme A to glucosamine-1-phosphate (GlcN-1-P) to produce N-acetylglucosamine-1-phosphate (GlcNAc-1-P), which is converted into UDP-GlcNAc by the transfer of uridine 5-monophosphate (from uridine 5-triphosphate), a reaction catalyzed by the N-terminal domain. This chain is Bifunctional protein GlmU, found in Dichelobacter nodosus (strain VCS1703A).